The primary structure comprises 122 residues: Large ribosomal subunit protein uL14c (122 aa).

The protein belongs to the universal ribosomal protein uL14 family. As to quaternary structure, part of the 50S ribosomal subunit.

The protein resides in the plastid. In terms of biological role, binds to 23S rRNA. This is Large ribosomal subunit protein uL14c from Cuscuta gronovii (Common dodder).